Reading from the N-terminus, the 462-residue chain is Tubby-like F-box protein 7 (462 aa).

Positions 54–109 (SKWAGLPPELLRDVMKRLEEDDSNWPSRKDVVACASVCTTWRDMCKDIVRNPEFCG) constitute an F-box domain. 2 disordered regions span residues 317–338 (FSEF…DDVN) and 383–418 (QPSS…SSSN). The segment covering 383 to 417 (QPSSGAASEPSQAGQAAQQQTQPSQPSSSSSSSSS) has biased composition (low complexity).

Belongs to the TUB family. In terms of tissue distribution, ubiquitous.

The polypeptide is Tubby-like F-box protein 7 (TULP7) (Oryza sativa subsp. japonica (Rice)).